The chain runs to 397 residues: Tryptophan synthase beta chain (397 aa).

At lysine 87 the chain carries N6-(pyridoxal phosphate)lysine.

It belongs to the TrpB family. In terms of assembly, tetramer of two alpha and two beta chains. Pyridoxal 5'-phosphate is required as a cofactor.

It catalyses the reaction (1S,2R)-1-C-(indol-3-yl)glycerol 3-phosphate + L-serine = D-glyceraldehyde 3-phosphate + L-tryptophan + H2O. Its pathway is amino-acid biosynthesis; L-tryptophan biosynthesis; L-tryptophan from chorismate: step 5/5. The beta subunit is responsible for the synthesis of L-tryptophan from indole and L-serine. This is Tryptophan synthase beta chain from Salmonella arizonae (strain ATCC BAA-731 / CDC346-86 / RSK2980).